The sequence spans 136 residues: NADH-ubiquinone oxidoreductase chain 2 (136 aa).

4 helical membrane passes run 12–32 (YFLI…NQSF), 34–54 (FLIP…MWLV), 74–94 (IGPL…WLMV), and 99–119 (FLLM…AVIL).

It belongs to the complex I subunit 2 family.

It localises to the mitochondrion inner membrane. The enzyme catalyses a ubiquinone + NADH + 5 H(+)(in) = a ubiquinol + NAD(+) + 4 H(+)(out). Its function is as follows. Core subunit of the mitochondrial membrane respiratory chain NADH dehydrogenase (Complex I) that is believed to belong to the minimal assembly required for catalysis. Complex I functions in the transfer of electrons from NADH to the respiratory chain. The immediate electron acceptor for the enzyme is believed to be ubiquinone. This is NADH-ubiquinone oxidoreductase chain 2 (ND2) from Artemia salina (Brine shrimp).